Here is a 489-residue protein sequence, read N- to C-terminus: Serine/threonine-protein kinase BSK3 (489 aa).

Gly-2 carries N-myristoyl glycine lipidation. Positions 58–324 constitute a Protein kinase domain; the sequence is EYIVSEHGEK…ETEVLSHVLM (267 aa). Residues 64–72 and Lys-86 each bind ATP; that span reads HGEKAPNVV. Catalysis depends on Asp-180, which acts as the Proton acceptor. Ser-212 carries the phosphoserine modification.

It belongs to the protein kinase superfamily. Ser/Thr protein kinase family. As to quaternary structure, interacts with BRI1. Post-translationally, phosphorylated by BRI1 upon brassinolide (BL) treatment. Phosphorylated by ASK7/BIN2 and ASK9/BIL2.

It localises to the cell membrane. The enzyme catalyses L-seryl-[protein] + ATP = O-phospho-L-seryl-[protein] + ADP + H(+). It carries out the reaction L-threonyl-[protein] + ATP = O-phospho-L-threonyl-[protein] + ADP + H(+). Functionally, probable serine/threonine kinase that acts as a positive regulator of brassinosteroid (BR) signaling downstream of the receptor kinase BRI1. Mediates signal transduction from BRI1 by functioning as substrate of BRI1. Functions redundantly with BSK4, BSK6, BSK7 and BSK8. In Arabidopsis thaliana (Mouse-ear cress), this protein is Serine/threonine-protein kinase BSK3.